The following is a 324-amino-acid chain: Glutaminase 2 (324 aa).

Positions 75, 127, 171, 178, 202, 254, and 272 each coordinate substrate.

This sequence belongs to the glutaminase family. Homotetramer.

The catalysed reaction is L-glutamine + H2O = L-glutamate + NH4(+). This chain is Glutaminase 2, found in Halalkalibacterium halodurans (strain ATCC BAA-125 / DSM 18197 / FERM 7344 / JCM 9153 / C-125) (Bacillus halodurans).